Here is a 287-residue protein sequence, read N- to C-terminus: Phosphatidylserine decarboxylase proenzyme (287 aa).

Active-site charge relay system; for autoendoproteolytic cleavage activity residues include aspartate 90, histidine 147, and serine 252. The active-site Schiff-base intermediate with substrate; via pyruvic acid; for decarboxylase activity is the serine 252. The residue at position 252 (serine 252) is a Pyruvic acid (Ser); by autocatalysis.

This sequence belongs to the phosphatidylserine decarboxylase family. PSD-B subfamily. Prokaryotic type I sub-subfamily. Heterodimer of a large membrane-associated beta subunit and a small pyruvoyl-containing alpha subunit. Pyruvate serves as cofactor. Is synthesized initially as an inactive proenzyme. Formation of the active enzyme involves a self-maturation process in which the active site pyruvoyl group is generated from an internal serine residue via an autocatalytic post-translational modification. Two non-identical subunits are generated from the proenzyme in this reaction, and the pyruvate is formed at the N-terminus of the alpha chain, which is derived from the carboxyl end of the proenzyme. The autoendoproteolytic cleavage occurs by a canonical serine protease mechanism, in which the side chain hydroxyl group of the serine supplies its oxygen atom to form the C-terminus of the beta chain, while the remainder of the serine residue undergoes an oxidative deamination to produce ammonia and the pyruvoyl prosthetic group on the alpha chain. During this reaction, the Ser that is part of the protease active site of the proenzyme becomes the pyruvoyl prosthetic group, which constitutes an essential element of the active site of the mature decarboxylase.

The protein localises to the cell membrane. It carries out the reaction a 1,2-diacyl-sn-glycero-3-phospho-L-serine + H(+) = a 1,2-diacyl-sn-glycero-3-phosphoethanolamine + CO2. It participates in phospholipid metabolism; phosphatidylethanolamine biosynthesis; phosphatidylethanolamine from CDP-diacylglycerol: step 2/2. Its function is as follows. Catalyzes the formation of phosphatidylethanolamine (PtdEtn) from phosphatidylserine (PtdSer). In Pseudomonas putida (strain W619), this protein is Phosphatidylserine decarboxylase proenzyme.